Here is a 275-residue protein sequence, read N- to C-terminus: Elongation factor Ts (275 aa).

The segment at threonine 76–valine 79 is involved in Mg(2+) ion dislocation from EF-Tu.

It belongs to the EF-Ts family.

The protein resides in the cytoplasm. Associates with the EF-Tu.GDP complex and induces the exchange of GDP to GTP. It remains bound to the aminoacyl-tRNA.EF-Tu.GTP complex up to the GTP hydrolysis stage on the ribosome. The chain is Elongation factor Ts from Corynebacterium glutamicum (strain ATCC 13032 / DSM 20300 / JCM 1318 / BCRC 11384 / CCUG 27702 / LMG 3730 / NBRC 12168 / NCIMB 10025 / NRRL B-2784 / 534).